Reading from the N-terminus, the 264-residue chain is PDZ domain-containing protein 9 (264 aa).

The PDZ domain occupies 30–109 (QTKLTVGSLG…GTVLQIKVYR (80 aa)).

This is PDZ domain-containing protein 9 (PDZD9) from Homo sapiens (Human).